Consider the following 197-residue polypeptide: Protein Hikeshi (197 aa).

The segment at 18–55 (VAEDKFVFDLPDYENINHVVVFMLGTIPFPEGMGGSVY) is required for F-X-F-G repeats-nucleoporins recognition and nuclear import. The flexible linker region involved in nuclear import of HSP70 proteins stretch occupies residues 124-134 (QTPVGSAAVSS).

This sequence belongs to the OPI10 family. As to quaternary structure, forms an asymmetric homodimer; required for binding and nuclear import of HSP70 proteins. Interacts with ATP-bound HSP70 proteins. Interacts with NUP62 and NUP153 (via F-X-F-G repeats). Interacts with HSPA8. In terms of tissue distribution, expressed in the central white matter of newborn and adult brain, particularly in regions where oligodendrocytes are generated.

Its subcellular location is the cytoplasm. It localises to the cytosol. It is found in the nucleus. Acts as a specific nuclear import carrier for HSP70 proteins following heat-shock stress: acts by mediating the nucleoporin-dependent translocation of ATP-bound HSP70 proteins into the nucleus. HSP70 proteins import is required to protect cells from heat shock damages. Does not translocate ADP-bound HSP70 proteins into the nucleus. May also be indirectly required for organization and/or function of the secretory apparatus in Club cells in lung. This chain is Protein Hikeshi, found in Mus musculus (Mouse).